Here is a 35-residue protein sequence, read N- to C-terminus: Photosystem II reaction center protein T (35 aa).

Residues 3-23 (ALVYTFLLVGTLGIIFFAIFF) traverse the membrane as a helical segment.

The protein belongs to the PsbT family. As to quaternary structure, PSII is composed of 1 copy each of membrane proteins PsbA, PsbB, PsbC, PsbD, PsbE, PsbF, PsbH, PsbI, PsbJ, PsbK, PsbL, PsbM, PsbT, PsbY, PsbZ, Psb30/Ycf12, at least 3 peripheral proteins of the oxygen-evolving complex and a large number of cofactors. It forms dimeric complexes.

The protein resides in the plastid. Its subcellular location is the chloroplast thylakoid membrane. Found at the monomer-monomer interface of the photosystem II (PS II) dimer, plays a role in assembly and dimerization of PSII. PSII is a light-driven water plastoquinone oxidoreductase, using light energy to abstract electrons from H(2)O, generating a proton gradient subsequently used for ATP formation. In Marchantia polymorpha (Common liverwort), this protein is Photosystem II reaction center protein T.